We begin with the raw amino-acid sequence, 320 residues long: tRNA (guanine(10)-N2)-dimethyltransferase (320 aa).

In terms of domain architecture, THUMP spans 46 to 136; the sequence is EKFFERLAYT…DDKCYVGLLE (91 aa).

The protein belongs to the methyltransferase superfamily. Trm-G10 family. In terms of assembly, monomer.

The protein localises to the cytoplasm. It carries out the reaction guanosine(10) in tRNA + 2 S-adenosyl-L-methionine = N(2)-dimethylguanosine(10) in tRNA + 2 S-adenosyl-L-homocysteine + 2 H(+). Catalyzes the adenosylmethionine-dependent methylation of the exocyclic amino group (N(2)) of guanosine at position 10 of various tRNAs. Acts via a two-step process that leads to the formation of either N(2)-monomethyl (m(2)G) or N(2)-dimethylguanosine (m(2)(2)G). This Archaeoglobus fulgidus (strain ATCC 49558 / DSM 4304 / JCM 9628 / NBRC 100126 / VC-16) protein is tRNA (guanine(10)-N2)-dimethyltransferase (trmG10).